A 423-amino-acid polypeptide reads, in one-letter code: Cell adhesion molecule CEACAM16 (423 aa).

The signal sequence occupies residues 1–22 (MKMPLTWGSWFLLSAWILNAGA). N-linked (GlcNAc...) asparagine glycosylation occurs at Asn38. The tract at residues 77 to 96 (ETPGPAHTGREAVRPDGSLD) is disordered. The segment covering 84 to 95 (TGREAVRPDGSL) has biased composition (basic and acidic residues). Ig-like C2-type domains are found at residues 134–219 (PPTV…LNLT) and 224–310 (PERV…ASVV). An intrachain disulfide couples Cys155 to Cys202. N-linked (GlcNAc...) asparagine glycosylation is present at Asn217. Cys253 and Cys294 form a disulfide bridge.

This sequence belongs to the immunoglobulin superfamily. CEA family. In terms of assembly, homooligomer; can for homodimers and homotetramers. Interacts with TECTA and TECTB.

Its subcellular location is the secreted. Functionally, required for proper hearing, plays a role in maintaining the integrity of the tectorial membrane. The chain is Cell adhesion molecule CEACAM16 from Rattus norvegicus (Rat).